Consider the following 906-residue polypeptide: Disintegrin and metalloproteinase domain-containing protein 22 (906 aa).

The first 25 residues, 1–25, serve as a signal peptide directing secretion; sequence MQAAVAVSVPFLLLCVLGTCPPARC. Positions 26 to 222 are excised as a propeptide; the sequence is GQAGDASLME…KFILKPRPKR (197 aa). Asn175 is a glycosylation site (N-linked (GlcNAc...) asparagine). The Extracellular portion of the chain corresponds to 223-736; that stretch reads SKRQLRRYPR…LSGNGVAGTN (514 aa). In terms of domain architecture, Peptidase M12B spans 239 to 438; it reads KYIELMIVND…GGGACLFNKP (200 aa). 17 cysteine pairs are disulfide-bonded: Cys349–Cys433, Cys392–Cys417, Cys394–Cys401, Cys447–Cys477, Cys458–Cys474, Cys460–Cys466, Cys473–Cys494, Cys485–Cys491, Cys490–Cys516, Cys503–Cys523, Cys510–Cys542, Cys535–Cys547, Cys554–Cys605, Cys569–Cys635, Cys583–Cys593, Cys600–Cys663, and Cys657–Cys668. The Disintegrin domain occupies 444–531; sequence PPECGNGFIE…QCAPNIHKMD (88 aa). A glycan (N-linked (GlcNAc...) asparagine) is linked at Asn519. Asn634 carries an N-linked (GlcNAc...) asparagine glycan. Residue Asn675 is glycosylated (N-linked (GlcNAc...) asparagine). An EGF-like domain is found at 675–712; sequence NFSTCLSSKEGTICSGNGVCSNELKCVCNRHWIGSDCN. Intrachain disulfides connect Cys679/Cys694, Cys688/Cys700, and Cys702/Cys711. Residues 737 to 757 form a helical membrane-spanning segment; the sequence is IIIGIIAGTILVLALILGITA. Over 758–906 the chain is Cytoplasmic; sequence WGYKNYREQR…QSARLWETSI (149 aa). The disordered stretch occupies residues 785–906; that stretch reads YSDIPPGVST…QSARLWETSI (122 aa). Low complexity predominate over residues 793–810; it reads STNSASSSKKRSNGLSHS. Phosphoserine is present on Ser810. A compositionally biased stretch (basic and acidic residues) spans 811–829; the sequence is WSERIPDTKHISDICENGR. At Ser834 the chain carries Phosphoserine. The span at 842–853 shows a compositional bias: basic residues; the sequence is NKKKIRGKRFRP. Ser857, Ser862, Ser866, and Ser870 each carry phosphoserine. A compositionally biased stretch (low complexity) spans 862 to 877; the sequence is SPAKSPSSSTGSIASS.

As to quaternary structure, interacts with LGI1. Interacts with DLG4/PSD95. Also binds LGI4. Interacts with KCNA2 and DLG2. Interacts with ADAM11. Interacts (via C-terminus) with YWHAB/14-3-3 beta. Interacts (via C-terminus) with YWHAZ/14-3-3 zeta. The precursor is cleaved by a furin endopeptidase. Highly expressed in the brain and in some high-grade but not low-grade gliomas. Detected slightly or not at all in other tissues.

It is found in the cell membrane. Its subcellular location is the cell projection. It localises to the axon. Functionally, probable ligand for integrin in the brain. This is a non catalytic metalloprotease-like protein. Involved in regulation of cell adhesion and spreading and in inhibition of cell proliferation. Neuronal receptor for LGI1. This Homo sapiens (Human) protein is Disintegrin and metalloproteinase domain-containing protein 22 (ADAM22).